Here is a 170-residue protein sequence, read N- to C-terminus: MNLRDKIAEYPNFPKKGILFRDFSPILKDPSAMESIADEFSKYFHPKNIDIFAGIESRGFILACILATRYNKGMMMIRKAGKLPGKTTKISYTIEYGKDTIEIQKDIIEEGQRVLICDDLLATGGTAKAAAKLIEKVGGKIVGFAFIIELTDLNGMKGISKYDCKSLVKY.

The protein belongs to the purine/pyrimidine phosphoribosyltransferase family. As to quaternary structure, homodimer.

The protein localises to the cytoplasm. The enzyme catalyses AMP + diphosphate = 5-phospho-alpha-D-ribose 1-diphosphate + adenine. It participates in purine metabolism; AMP biosynthesis via salvage pathway; AMP from adenine: step 1/1. Its function is as follows. Catalyzes a salvage reaction resulting in the formation of AMP, that is energically less costly than de novo synthesis. The polypeptide is Adenine phosphoribosyltransferase (Nitrosopumilus maritimus (strain SCM1)).